The following is a 495-amino-acid chain: UDP-N-acetylmuramate--L-alanine ligase (495 aa).

120-126 (GSHGKTT) serves as a coordination point for ATP.

It belongs to the MurCDEF family.

It localises to the cytoplasm. It carries out the reaction UDP-N-acetyl-alpha-D-muramate + L-alanine + ATP = UDP-N-acetyl-alpha-D-muramoyl-L-alanine + ADP + phosphate + H(+). It functions in the pathway cell wall biogenesis; peptidoglycan biosynthesis. Cell wall formation. This chain is UDP-N-acetylmuramate--L-alanine ligase, found in Rickettsia prowazekii (strain Madrid E).